The primary structure comprises 296 residues: tRNA (guanine-N(7)-)-methyltransferase (296 aa).

Residues 1-26 (MSKRTREESEMEAGPSTASPGVSVSP) form a disordered region. Residues G101, 124 to 125 (EI), 168 to 169 (NS), and L188 contribute to the S-adenosyl-L-methionine site. The active site involves D191. Residue 266–268 (TEE) coordinates S-adenosyl-L-methionine.

Belongs to the class I-like SAM-binding methyltransferase superfamily. TrmB family. In terms of assembly, forms a complex with TRM82.

It localises to the nucleus. The enzyme catalyses guanosine(46) in tRNA + S-adenosyl-L-methionine = N(7)-methylguanosine(46) in tRNA + S-adenosyl-L-homocysteine. The protein operates within tRNA modification; N(7)-methylguanine-tRNA biosynthesis. Its function is as follows. Catalyzes the formation of N(7)-methylguanine at position 46 (m7G46) in tRNA. This is tRNA (guanine-N(7)-)-methyltransferase from Cryptococcus neoformans var. neoformans serotype D (strain JEC21 / ATCC MYA-565) (Filobasidiella neoformans).